A 443-amino-acid chain; its full sequence is Xaa-Pro dipeptidase (443 aa).

Positions 246, 257, 339, 384, and 423 each coordinate Mn(2+).

This sequence belongs to the peptidase M24B family. Bacterial-type prolidase subfamily. The cofactor is Mn(2+).

The catalysed reaction is Xaa-L-Pro dipeptide + H2O = an L-alpha-amino acid + L-proline. Its function is as follows. Splits dipeptides with a prolyl residue in the C-terminal position. This is Xaa-Pro dipeptidase from Citrobacter koseri (strain ATCC BAA-895 / CDC 4225-83 / SGSC4696).